Reading from the N-terminus, the 171-residue chain is Cytochrome c-type biogenesis protein CcmE (171 aa).

At 1-7 (MNRKQKR) the chain is on the cytoplasmic side. A helical; Signal-anchor for type II membrane protein transmembrane segment spans residues 8-28 (LAVIAGGMGFIAAAVLLVMFA). Topologically, residues 29–171 (FSQSVAYFYM…NPGEEAKATQ (143 aa)) are periplasmic. Heme-binding residues include His-124 and Tyr-128. The segment at 132-171 (DVADRLKQQGLWKEGQGGQESPGKEGQGQENPGEEAKATQ) is disordered.

The protein belongs to the CcmE/CycJ family.

The protein localises to the cell inner membrane. Functionally, heme chaperone required for the biogenesis of c-type cytochromes. Transiently binds heme delivered by CcmC and transfers the heme to apo-cytochromes in a process facilitated by CcmF and CcmH. The protein is Cytochrome c-type biogenesis protein CcmE of Rhizobium leguminosarum bv. trifolii (strain WSM2304).